We begin with the raw amino-acid sequence, 299 residues long: Lysine exporter LysO (299 aa).

Helical transmembrane passes span 1–21, 31–51, 58–78, 109–129, 131–151, 169–189, 207–227, and 277–297; these read MFSG…IPLR, QLLS…LAFL, LLAI…CNIA, LKLC…LAFL, HATE…GIQL, IVAV…AFIL, SLSG…AAFF, and PAAI…IAFF.

Belongs to the LysO family.

Its subcellular location is the cell inner membrane. Functionally, mediates export of lysine. The sequence is that of Lysine exporter LysO from Escherichia coli (strain K12).